A 577-amino-acid polypeptide reads, in one-letter code: Adenine deaminase (577 aa).

This sequence belongs to the metallo-dependent hydrolases superfamily. Adenine deaminase family. Requires Mn(2+) as cofactor.

The enzyme catalyses adenine + H2O + H(+) = hypoxanthine + NH4(+). The chain is Adenine deaminase from Geobacillus kaustophilus (strain HTA426).